The sequence spans 276 residues: MGTIFDLKNISYSYVGEITVLKDISFKVDPGEQISIIGSNGSGKSTLLSLLDGLIYPTVGEFYAFDNKIVEEVFDTIKDNEFRSYFRTKVGFLFQNSDVQLFSPTVFEEVAFGPLQLNITPEEVKTRVLEVLEMMELTKLKDRSPHTLSGGEKKKLCIATVLATNPDVLLLDEPTAGLDPRTQLWLTELLQELGSMGKTIIIATHDLELVEQISKRAIVMGEDHRIVVDGDVEKVLNDLNLLLSTNLIHEHMHMHGKLVHEHLHAHDKEHAHEHKN.

The ABC transporter domain maps to 5 to 247 (FDLKNISYSY…DLNLLLSTNL (243 aa)). Position 38-45 (38-45 (GSNGSGKS)) interacts with ATP.

The protein belongs to the ABC transporter superfamily.

The protein localises to the cell membrane. Probably part of an ABC transporter complex. Responsible for energy coupling to the transport system. This chain is Putative ABC transporter ATP-binding protein MA_4021, found in Methanosarcina acetivorans (strain ATCC 35395 / DSM 2834 / JCM 12185 / C2A).